We begin with the raw amino-acid sequence, 137 residues long: ATP synthase epsilon chain 1 (137 aa).

This sequence belongs to the ATPase epsilon chain family. F-type ATPases have 2 components, CF(1) - the catalytic core - and CF(0) - the membrane proton channel. CF(1) has five subunits: alpha(3), beta(3), gamma(1), delta(1), epsilon(1). CF(0) has three main subunits: a, b and c.

The protein resides in the cell inner membrane. Produces ATP from ADP in the presence of a proton gradient across the membrane. In Ralstonia nicotianae (strain ATCC BAA-1114 / GMI1000) (Ralstonia solanacearum), this protein is ATP synthase epsilon chain 1 (atpC1).